The chain runs to 99 residues: NADH-quinone oxidoreductase subunit K (99 aa).

The next 3 membrane-spanning stretches (helical) occupy residues 3-23, 28-48, and 59-79; these read PTYY…GVLV, IVVF…LVTF, and VMAF…LAII.

It belongs to the complex I subunit 4L family. NDH-1 is composed of 14 different subunits. Subunits NuoA, H, J, K, L, M, N constitute the membrane sector of the complex.

The protein resides in the cell membrane. It carries out the reaction a quinone + NADH + 5 H(+)(in) = a quinol + NAD(+) + 4 H(+)(out). Its function is as follows. NDH-1 shuttles electrons from NADH, via FMN and iron-sulfur (Fe-S) centers, to quinones in the respiratory chain. The immediate electron acceptor for the enzyme in this species is believed to be a menaquinone. Couples the redox reaction to proton translocation (for every two electrons transferred, four hydrogen ions are translocated across the cytoplasmic membrane), and thus conserves the redox energy in a proton gradient. This chain is NADH-quinone oxidoreductase subunit K, found in Saccharopolyspora erythraea (strain ATCC 11635 / DSM 40517 / JCM 4748 / NBRC 13426 / NCIMB 8594 / NRRL 2338).